The sequence spans 318 residues: Protease HtpX homolog (318 aa).

A run of 3 helical transmembrane segments spans residues Met1–Leu21, Ile35–Ile55, and Ala56–Val76. His167 serves as a coordination point for Zn(2+). The active site involves Glu168. Position 171 (His171) interacts with Zn(2+). 2 helical membrane passes run Leu178–Leu198 and Ile209–Ala229. Glu235 contacts Zn(2+).

Belongs to the peptidase M48B family. Zn(2+) serves as cofactor.

It is found in the cell membrane. The chain is Protease HtpX homolog from Methanopyrus kandleri (strain AV19 / DSM 6324 / JCM 9639 / NBRC 100938).